The chain runs to 507 residues: RNA-splicing ligase RtcB homolog (507 aa).

Positions 121, 124, 229, 261, and 355 each coordinate Mn(2+). GMP is bound at residue 228-232 (NHYGE). GMP-binding positions include 355–356 (HN), 404–407 (GGTM), serine 411, 430–433 (HGSG), and lysine 506. Catalysis depends on histidine 430, which acts as the GMP-histidine intermediate.

This sequence belongs to the RtcB family. In terms of assembly, catalytic component of the tRNA-splicing ligase complex. Mn(2+) is required as a cofactor.

The catalysed reaction is a 3'-end 3'-phospho-ribonucleotide-RNA + a 5'-end dephospho-ribonucleoside-RNA + GTP = a ribonucleotidyl-ribonucleotide-RNA + GMP + diphosphate. The enzyme catalyses a 3'-end 2',3'-cyclophospho-ribonucleotide-RNA + a 5'-end dephospho-ribonucleoside-RNA + GTP + H2O = a ribonucleotidyl-ribonucleotide-RNA + GMP + diphosphate + H(+). In terms of biological role, catalytic subunit of the tRNA-splicing ligase complex that acts by directly joining spliced tRNA halves to mature-sized tRNAs by incorporating the precursor-derived splice junction phosphate into the mature tRNA as a canonical 3',5'-phosphodiester. May act as an RNA ligase with broad substrate specificity, and may function toward other RNAs. This chain is RNA-splicing ligase RtcB homolog, found in Theileria parva (East coast fever infection agent).